The primary structure comprises 254 residues: Pyruvate aldolase (254 aa).

Histidine 48 (proton acceptor) is an active-site residue. A divalent metal cation-binding residues include glutamate 151 and aspartate 177.

The protein belongs to the HpcH/HpaI aldolase family. Requires a divalent metal cation as cofactor.

It carries out the reaction D-glyceraldehyde + pyruvate = 2-dehydro-3-deoxy-L-galactonate. Functionally, aldolase which can catalyze in vitro the aldolisation reaction between pyruvate (PA) and D-glyceraldehyde (D-GA) to form 2-dehydro-3-deoxy-L-galactonate. The chain is Pyruvate aldolase from Rhizobium etli (strain ATCC 51251 / DSM 11541 / JCM 21823 / NBRC 15573 / CFN 42).